We begin with the raw amino-acid sequence, 195 residues long: Ethylene-responsive transcription factor ERF018 (195 aa).

Residues 1-13 (MVKQAMKEEEKKR) are compositionally biased toward basic and acidic residues. A disordered region spans residues 1-22 (MVKQAMKEEEKKRNTAMQSKYK). Positions 20–77 (KYKGVRKRKWGKWVSEIRLPHSRERIWLGSYDTPEKAARAFDAAQFCLRGGDANFNFP) form a DNA-binding region, AP2/ERF.

The protein belongs to the AP2/ERF transcription factor family. ERF subfamily.

The protein localises to the nucleus. In terms of biological role, probably acts as a transcriptional activator. Binds to the GCC-box pathogenesis-related promoter element. May be involved in the regulation of gene expression by stress factors and by components of stress signal transduction pathways. The sequence is that of Ethylene-responsive transcription factor ERF018 (ERF018) from Arabidopsis thaliana (Mouse-ear cress).